Reading from the N-terminus, the 306-residue chain is Hydroxypyruvate reductase (306 aa).

Residues 152 to 153 (NI), aspartate 172, 228 to 230 (TAR), and aspartate 254 contribute to the NAD(+) site. Residue arginine 230 is part of the active site. Glutamate 259 is a catalytic residue. The active-site Proton donor is histidine 280. 280 to 283 (HIGA) contributes to the NAD(+) binding site.

Belongs to the D-isomer specific 2-hydroxyacid dehydrogenase family.

The enzyme catalyses (R)-glycerate + NAD(+) = 3-hydroxypyruvate + NADH + H(+). It catalyses the reaction (R)-glycerate + NADP(+) = 3-hydroxypyruvate + NADPH + H(+). Involved in the degradation of L-serine via 3-hydroxypyruvate. Catalyzes the non-reversible reduction of 3-hydroxypyruvate to yield D-glycerate. The protein is Hydroxypyruvate reductase of Thermotoga maritima (strain ATCC 43589 / DSM 3109 / JCM 10099 / NBRC 100826 / MSB8).